The following is a 200-amino-acid chain: Large ribosomal subunit protein bL9 (200 aa).

The protein belongs to the bacterial ribosomal protein bL9 family.

Functionally, binds to the 23S rRNA. The protein is Large ribosomal subunit protein bL9 of Ruegeria pomeroyi (strain ATCC 700808 / DSM 15171 / DSS-3) (Silicibacter pomeroyi).